Reading from the N-terminus, the 699-residue chain is Glycine--tRNA ligase beta subunit (699 aa).

It belongs to the class-II aminoacyl-tRNA synthetase family. Tetramer of two alpha and two beta subunits.

Its subcellular location is the cytoplasm. The catalysed reaction is tRNA(Gly) + glycine + ATP = glycyl-tRNA(Gly) + AMP + diphosphate. This Methylobacterium radiotolerans (strain ATCC 27329 / DSM 1819 / JCM 2831 / NBRC 15690 / NCIMB 10815 / 0-1) protein is Glycine--tRNA ligase beta subunit.